Reading from the N-terminus, the 602-residue chain is Beta-(1--&gt;2)glucan export ATP-binding/permease protein NdvA (602 aa).

One can recognise an ABC transmembrane type-1 domain in the interval 21–311 (GWTLAVANLL…VVSFVNSLMM (291 aa)). 6 helical membrane-spanning segments follow: residues 22–42 (WTLA…PVLF), 68–88 (LLAA…TVAL), 146–166 (EHFA…YINW), 167–187 (RLAI…TLVV), 254–274 (VITR…GIAL), and 276–296 (QQGL…TLLI). The region spanning 345 to 579 (VEFLDVSFSY…RGRFAELARA (235 aa)) is the ABC transporter domain. 378 to 385 (GATGAGKS) lines the ATP pocket.

This sequence belongs to the ABC transporter superfamily. Beta-(1--&gt;2)glucan exporter (TC 3.A.1.108.1) family. Homodimer.

The protein localises to the cell inner membrane. It catalyses the reaction [(1-&gt;2)-beta-D-glucosyl](n)(in) + ATP + H2O = [(1-&gt;2)-beta-D-glucosyl](n)(out) + ADP + phosphate + H(+). In terms of biological role, involved in beta-(1--&gt;2)glucan export. Transmembrane domains (TMD) form a pore in the inner membrane and the ATP-binding domain (NBD) is responsible for energy generation. The polypeptide is Beta-(1--&gt;2)glucan export ATP-binding/permease protein NdvA (Rhodopseudomonas palustris (strain BisB5)).